A 127-amino-acid chain; its full sequence is Spore germination protein 1 (127 aa).

An N-terminal signal peptide occupies residues 1–25; it reads MNIKNSLILIISTIFVLSMINGGLT. N-linked (GlcNAc...) asparagine glycosylation is found at N54 and N118.

The protein belongs to the Dictyostelium gerABC family.

It is found in the secreted. The sequence is that of Spore germination protein 1 (gerA) from Dictyostelium discoideum (Social amoeba).